A 239-amino-acid chain; its full sequence is Lipoprotein-releasing system ATP-binding protein LolD (239 aa).

Positions 9 to 239 (LQVQHVSKHY…AATSPTGLAE (231 aa)) constitute an ABC transporter domain. 45-52 (GSSGSGKS) lines the ATP pocket.

It belongs to the ABC transporter superfamily. Lipoprotein translocase (TC 3.A.1.125) family. In terms of assembly, the complex is composed of two ATP-binding proteins (LolD) and two transmembrane proteins (LolC and LolE).

It is found in the cell inner membrane. Its function is as follows. Part of the ABC transporter complex LolCDE involved in the translocation of mature outer membrane-directed lipoproteins, from the inner membrane to the periplasmic chaperone, LolA. Responsible for the formation of the LolA-lipoprotein complex in an ATP-dependent manner. The polypeptide is Lipoprotein-releasing system ATP-binding protein LolD (Shewanella frigidimarina (strain NCIMB 400)).